The chain runs to 293 residues: Formamidopyrimidine-DNA glycosylase (293 aa).

Pro-2 functions as the Schiff-base intermediate with DNA in the catalytic mechanism. Glu-3 acts as the Proton donor in catalysis. Lys-58 acts as the Proton donor; for beta-elimination activity in catalysis. Positions 104, 123, and 166 each coordinate DNA. The segment at 257–293 (QVYDREGEPCRTDGCGGVVKRFVQNGRSTFWCPKCQR) adopts an FPG-type zinc-finger fold. The active-site Proton donor; for delta-elimination activity is Arg-283.

This sequence belongs to the FPG family. Monomer. Zn(2+) is required as a cofactor.

The catalysed reaction is Hydrolysis of DNA containing ring-opened 7-methylguanine residues, releasing 2,6-diamino-4-hydroxy-5-(N-methyl)formamidopyrimidine.. It carries out the reaction 2'-deoxyribonucleotide-(2'-deoxyribose 5'-phosphate)-2'-deoxyribonucleotide-DNA = a 3'-end 2'-deoxyribonucleotide-(2,3-dehydro-2,3-deoxyribose 5'-phosphate)-DNA + a 5'-end 5'-phospho-2'-deoxyribonucleoside-DNA + H(+). Involved in base excision repair of DNA damaged by oxidation or by mutagenic agents. Acts as a DNA glycosylase that recognizes and removes damaged bases. Has a preference for oxidized purines, such as 7,8-dihydro-8-oxoguanine (8-oxoG). Has AP (apurinic/apyrimidinic) lyase activity and introduces nicks in the DNA strand. Cleaves the DNA backbone by beta-delta elimination to generate a single-strand break at the site of the removed base with both 3'- and 5'-phosphates. The chain is Formamidopyrimidine-DNA glycosylase from Bradyrhizobium sp. (strain BTAi1 / ATCC BAA-1182).